Here is a 29-residue protein sequence, read N- to C-terminus: uncharacterized protein (29 aa).

The protein resides in the plastid. It localises to the chloroplast. This is an uncharacterized protein from Trieres chinensis (Marine centric diatom).